The chain runs to 1252 residues: Calmodulin-regulated spectrin-associated protein 3 (1252 aa).

Disordered regions lie at residues 183-205 (KTEQ…SPAQ), 331-385 (HAVS…SMSH), 429-457 (SVSS…ESGD), 479-604 (GAAD…MSEL), 638-697 (FLQV…LGDY), 712-935 (QRDM…EAAR), 962-981 (TTRA…GDFT), 996-1030 (DLDK…DDSA), and 1063-1114 (PNNL…TGPR). Phosphothreonine is present on threonine 184. Position 193 is a phosphoserine (serine 193). Residues 203-312 (PAQPSIRYRK…LVVLLAEMYM (110 aa)) enclose the Calponin-homology (CH) domain. 6 positions are modified to phosphoserine: serine 334, serine 347, serine 351, serine 368, serine 373, and serine 382. The span at 335-353 (PRNTETVPSQNNSGSSSPV) shows a compositional bias: polar residues. The segment covering 359-373 (PLLSPGGPQSPLRGS) has biased composition (low complexity). Polar residues-rich tracts occupy residues 374-383 (TGSLKSSPSM), 441-450 (VSTSSRNSAQ), and 525-534 (ENPSKSSPCS). Serine 548, serine 555, and serine 561 each carry phosphoserine. Over residues 569-580 (AERKKQLVKAEA) the composition is skewed to basic and acidic residues. Positions 595–629 (EALSSEMSELGARLEEKRRAIEAQKRRIEAIFAKH) form a coiled coil. Serine 683 is modified (phosphoserine). Residues 696 to 727 (DYNRAVSKLSAALSSLQRDMQRLTDQQQRLLA) are a coiled coil. Residues 729–739 (PEAPGPAPPPA) show a composition bias toward pro residues. Positions 740–768 (AWVIPGPATGPKAASPSPARRAPAARRSP) are enriched in low complexity. Serine 767 is subject to Phosphoserine. Threonine 797 is subject to Phosphothreonine. Residues serine 812 and serine 881 each carry the phosphoserine modification. A compositionally biased stretch (polar residues) spans 812 to 825 (SPSQVPVQTRSSIL). Positions 887–934 (YKDEDKPEDEMAQKRASLLERQQRRVEEARRRKQWQEAEKEQKREEAA) are enriched in basic and acidic residues. Residues 896-943 (EMAQKRASLLERQQRRVEEARRRKQWQEAEKEQKREEAARLAQEAPGL) are a coiled coil. The residue at position 1077 (serine 1077) is a Phosphoserine. One can recognise a CKK domain in the interval 1112-1246 (GPRLYKEPSA…QSKKPTTPKK (135 aa)).

Belongs to the CAMSAP1 family. As to quaternary structure, interacts with PLEKHA7. Interacts with CAMSAP2. Interacts with KATNA1 and KATNB1; leading to regulate the length of CAMSAP3-decorated microtubule stretches. Interacts with AKAP9; regulating Golgi assembly in epithelial cells. Interacts with MACF1. Interacts with isoform C of CDH23; leading to inhibit CAMSAP3 ability to induce microtubule bundle formation. Interacts with AKNA. In terms of tissue distribution, expressed at the apical surface of respiratory epithelia, as well as in the acini of submucosal glands (at protein level). In cochlea, restricted to the organ of Corti and increases during development (at protein level). Highly expressed in both sensory hair cells and supporting cells.

The protein localises to the cytoplasm. The protein resides in the cytoskeleton. Its subcellular location is the cell junction. It is found in the adherens junction. It localises to the cilium axoneme. The protein localises to the cilium basal body. Functionally, key microtubule-organizing protein that specifically binds the minus-end of non-centrosomal microtubules and regulates their dynamics and organization. Specifically recognizes growing microtubule minus-ends and autonomously decorates and stabilizes microtubule lattice formed by microtubule minus-end polymerization. Acts on free microtubule minus-ends that are not capped by microtubule-nucleating proteins or other factors and protects microtubule minus-ends from depolymerization. In addition, it also reduces the velocity of microtubule polymerization. Required for the biogenesis and the maintenance of zonula adherens by anchoring the minus-end of microtubules to zonula adherens and by recruiting the kinesin KIFC3 to those junctional sites. Required for orienting the apical-to-basal polarity of microtubules in epithelial cells: acts by tethering non-centrosomal microtubules to the apical cortex, leading to their longitudinal orientation. Plays a key role in early embryos, which lack centrosomes: accumulates at the microtubule bridges that connect pairs of cells and enables the formation of a non-centrosomal microtubule-organizing center that directs intracellular transport in the early embryo. Couples non-centrosomal microtubules with actin: interaction with MACF1 at the minus ends of non-centrosomal microtubules, tethers the microtubules to actin filaments, regulating focal adhesion size and cell migration. Plays a key role in the generation of non-centrosomal microtubules by accumulating in the pericentrosomal region and cooperating with KATNA1 to release non-centrosomal microtubules from the centrosome. Through the microtubule cytoskeleton, also regulates the organization of cellular organelles including the Golgi and the early endosomes. Through interaction with AKAP9, involved in translocation of Golgi vesicles in epithelial cells, where microtubules are mainly non-centrosomal. Plays an important role in motile cilia function by facilitatating proper orientation of basal bodies and formation of central microtubule pairs in motile cilia. The polypeptide is Calmodulin-regulated spectrin-associated protein 3 (Mus musculus (Mouse)).